The primary structure comprises 427 residues: MKILTGTVNELLNELKIETDTNTSIQVETEVKTIIEKVKTAGDQALFDFTSKFDGVGLTELRVPAADIQAASAKIEPAFLDALQQAKVNIESFHSKQKQHAFLDSEKDGVIRGQLIRPLETVGVYVPGGTAAYPSSVLMNVLPAKIAGVKRIVMITPPGENGINPYVLASAQLAGVDEIYQVGGAHGIAALAHGTESIPKVDKIVGPGNIYVATAKREVFGLVDIDMIAGPSEIVVLADENANPAFIAADLLSQAEHDILARAILITTSKKIAEETQNEIDKQLENLPRKAIAQKSIETRGKIIIAATTQEMFDIMNEIAPEHLEVQLENPMNYLYQIKNAGSIFLGSYASEPLGDYFAGPNHVLPTSGTAKFFSPLGVEDFTKRSAFISYTKEALAKEKDAIVLLAKKEGLDAHAKAIQIRFEEEN.

The substrate site is built by serine 232, glutamine 254, and histidine 257. The Zn(2+) site is built by glutamine 254 and histidine 257. Residues glutamate 322 and histidine 323 each act as proton acceptor in the active site. Histidine 323, aspartate 356, glutamate 410, and histidine 415 together coordinate substrate. Zn(2+) is bound at residue aspartate 356. Residue histidine 415 coordinates Zn(2+).

It belongs to the histidinol dehydrogenase family. Requires Zn(2+) as cofactor.

It carries out the reaction L-histidinol + 2 NAD(+) + H2O = L-histidine + 2 NADH + 3 H(+). It participates in amino-acid biosynthesis; L-histidine biosynthesis; L-histidine from 5-phospho-alpha-D-ribose 1-diphosphate: step 9/9. Catalyzes the sequential NAD-dependent oxidations of L-histidinol to L-histidinaldehyde and then to L-histidine. In Listeria monocytogenes serotype 4b (strain F2365), this protein is Histidinol dehydrogenase.